The primary structure comprises 328 residues: P2Y purinoceptor 3 (328 aa).

Over 1–22 the chain is Extracellular; it reads MSMANFTAGRNSCTFQEEFKQV. Asn5 carries an N-linked (GlcNAc...) asparagine glycan. The chain crosses the membrane as a helical span at residues 23–43; sequence LLPLVYSVVFLLGLPLNAVVI. Topologically, residues 44–57 are cytoplasmic; the sequence is GQIWLARKALTRTT. The helical transmembrane segment at 58–78 threads the bilayer; it reads IYMLNLATADLLYVCSLPLLI. Residues 79–96 lie on the Extracellular side of the membrane; that stretch reads YNYTQKDYWPFGDFTCKF. The cysteines at positions 94 and 172 are disulfide-linked. A helical membrane pass occupies residues 97–117; sequence VRFQFYTNLHGSILFLTCISV. The Cytoplasmic portion of the chain corresponds to 118-139; it reads QRYMGICHPLASWHKKKGKKLT. Residues 140-160 form a helical membrane-spanning segment; it reads WLVCAAVWFIVIAQCLPTFVF. The Extracellular segment spans residues 161–189; sequence ASTGTQRNRTVCYDLSPPDRSASYFPYGI. A helical membrane pass occupies residues 190 to 210; the sequence is TLTITGFLLPFAAILACYCSM. The Cytoplasmic segment spans residues 211–231; it reads ARILCQKDELIGLAVHKKKDK. A helical membrane pass occupies residues 232 to 252; that stretch reads AVRMIIIVVIVFSISFFPFHL. Residues 253 to 275 lie on the Extracellular side of the membrane; that stretch reads TKTIYLIVRSSPTLPCPTLQAFA. Residues 276–298 traverse the membrane as a helical segment; the sequence is IAYKCTRPFASMNSVLDPILFYF. Residues 299–323 are Cytoplasmic-facing; the sequence is TQRKFRESTRYLLDKMSSKWRHDHC.

This sequence belongs to the G-protein coupled receptor 1 family.

The protein resides in the cell membrane. In terms of biological role, receptor for extracellular UDP &gt; ADP = UTP. The activity of this receptor is mediated by G proteins which activate a phosphatidylinositol-calcium second messenger system. This chain is P2Y purinoceptor 3 (P2RY3), found in Meleagris gallopavo (Wild turkey).